The following is a 1014-amino-acid chain: Disease resistance protein RGA4 (1014 aa).

The segment at 1-182 (MEAALLSGFI…PRIHEADLVG (182 aa)) is structured coiled coil (CC) domain. Positions 105-145 (RTVRATKKLLQTNQHLAQELQRLKRMVEEANQRKQRYTAAA) form a coiled coil. The NB-ARC domain occupies 189–466 (ELLEQLAERQ…WLAEGFVEPV (278 aa)). 11 LRR repeats span residues 484–506 (RNII…TYGM), 507–530 (MREF…DKFL), 531–552 (PKYV…NFNG), 580–602 (LRVL…ICNL), 603–624 (VLLK…IAKL), 625–647 (KDLE…VFGL), 701–725 (MNKL…DLRE), 762–784 (PCYL…VTSL), 785–807 (RGLK…ALSN), 808–833 (LSYL…GFPR), and 854–877 (LPFL…KIEC).

It belongs to the disease resistance NB-LRR family. Expressed in leaves.

Functionally, probable disease resistance protein. Resistance proteins guard the plant against pathogens that contain an appropriate avirulence protein via an indirect interaction with this avirulence protein. That triggers a defense system including the hypersensitive response, which restricts the pathogen growth. At the opposite of cultivars Aichi asahi and Sasanishiki, the cultivars Nipponbare, Mokoto and Hitomebore don't recognize the effector avirulence protein AVR-Pia from M.oryzae. The polypeptide is Disease resistance protein RGA4 (Oryza sativa subsp. japonica (Rice)).